Consider the following 274-residue polypeptide: Rhamnulose-1-phosphate aldolase (274 aa).

Glu-117 is a catalytic residue. Residues His-141, His-143, and His-212 each coordinate Zn(2+).

The protein belongs to the aldolase class II family. RhaD subfamily. As to quaternary structure, homotetramer. It depends on Zn(2+) as a cofactor.

It localises to the cytoplasm. The catalysed reaction is L-rhamnulose 1-phosphate = (S)-lactaldehyde + dihydroxyacetone phosphate. The protein operates within carbohydrate degradation; L-rhamnose degradation; glycerone phosphate from L-rhamnose: step 3/3. Catalyzes the reversible cleavage of L-rhamnulose-1-phosphate to dihydroxyacetone phosphate (DHAP) and L-lactaldehyde. This is Rhamnulose-1-phosphate aldolase from Yersinia pestis.